The following is a 36-amino-acid chain: MEVNILGVIATALFIIIPTSFLLILYVKTASQEQEQ.

The chain crosses the membrane as a helical span at residues 5-25; the sequence is ILGVIATALFIIIPTSFLLIL.

This sequence belongs to the PsbM family. PSII is composed of 1 copy each of membrane proteins PsbA, PsbB, PsbC, PsbD, PsbE, PsbF, PsbH, PsbI, PsbJ, PsbK, PsbL, PsbM, PsbT, PsbX, PsbY, PsbZ, Psb30/Ycf12, at least 3 peripheral proteins of the oxygen-evolving complex and a large number of cofactors. It forms dimeric complexes.

The protein resides in the plastid. The protein localises to the chloroplast thylakoid membrane. One of the components of the core complex of photosystem II (PSII). PSII is a light-driven water:plastoquinone oxidoreductase that uses light energy to abstract electrons from H(2)O, generating O(2) and a proton gradient subsequently used for ATP formation. It consists of a core antenna complex that captures photons, and an electron transfer chain that converts photonic excitation into a charge separation. This subunit is found at the monomer-monomer interface. The polypeptide is Photosystem II reaction center protein M (Chlorella vulgaris (Green alga)).